The sequence spans 459 residues: Serine carboxypeptidase-like 27 (459 aa).

The N-terminal stretch at 1–20 (MDYSFLLIILLLTISTSCCA) is a signal peptide. Intrachain disulfides connect Cys-91-Cys-344, Cys-252-Cys-264, and Cys-288-Cys-312. N-linked (GlcNAc...) asparagine glycosylation is present at Asn-142. Ser-184 is an active-site residue. N-linked (GlcNAc...) asparagine glycans are attached at residues Asn-289 and Asn-333. Catalysis depends on residues Asp-381 and His-433.

This sequence belongs to the peptidase S10 family. Ubiquitous.

The protein localises to the secreted. Its function is as follows. Probable carboxypeptidase. The protein is Serine carboxypeptidase-like 27 (SCPL27) of Arabidopsis thaliana (Mouse-ear cress).